The following is a 397-amino-acid chain: pH-sensitive adenylate cyclase MT1302 (397 aa).

Positions 1–191 (MTDHVREADD…IQDMLFMQLR (191 aa)) are regulatory domain. Positions 192–206 (HMMETEAVNAGERAA) are linker. The tract at residues 211–397 (PGARQVTVAF…QDDDLAGSSP (187 aa)) is catalytic domain. In terms of domain architecture, Guanylate cyclase spans 217 to 325 (TVAFADLVGF…SPVNVASRVT (109 aa)). Asp-222 provides a ligand contact to Mn(2+). Lys-261 contributes to the substrate binding site. A Mn(2+)-binding site is contributed by Asp-265. Residue Arg-298 participates in ATP binding. Residue Asp-312 coordinates substrate.

The protein belongs to the adenylyl cyclase class-4/guanylyl cyclase family. Homodimer. The cofactor is Mn(2+). Mg(2+) is required as a cofactor.

The enzyme catalyses ATP = 3',5'-cyclic AMP + diphosphate. Functionally, catalyzes the formation of the second messenger cAMP. This Mycobacterium tuberculosis (strain CDC 1551 / Oshkosh) protein is pH-sensitive adenylate cyclase MT1302.